The sequence spans 107 residues: Holo-[acyl-carrier-protein] synthase (107 aa).

Aspartate 10 and glutamate 54 together coordinate Mg(2+).

This sequence belongs to the P-Pant transferase superfamily. AcpS family. Mg(2+) is required as a cofactor.

It is found in the cytoplasm. The catalysed reaction is apo-[ACP] + CoA = holo-[ACP] + adenosine 3',5'-bisphosphate + H(+). In terms of biological role, transfers the 4'-phosphopantetheine moiety from coenzyme A to a Ser of acyl-carrier-protein. In Mycoplasma mobile (strain ATCC 43663 / 163K / NCTC 11711) (Mesomycoplasma mobile), this protein is Holo-[acyl-carrier-protein] synthase.